Here is a 354-residue protein sequence, read N- to C-terminus: Guanine nucleotide-binding protein G(o) subunit alpha (354 aa).

Gly2 is lipidated: N-myristoyl glycine. The S-palmitoyl cysteine moiety is linked to residue Cys3. In terms of domain architecture, G-alpha spans 32-354 (KDIKLLLLGA…ANNLRGCGLY (323 aa)). The G1 motif stretch occupies residues 35–48 (KLLLLGAGESGKST). Residues 40-47 (GAGESGKS), 176-182 (LRTRVKT), 201-205 (DVGGQ), 270-273 (NKKD), and Ala326 each bind GTP. Mg(2+)-binding residues include Ser47 and Thr182. A G2 motif region spans residues 174-182 (DILRTRVKT). The interval 197–206 (FKLFDVGGQR) is G3 motif. The tract at residues 266–273 (ILFLNKKD) is G4 motif. Positions 324-329 (TCATDT) are G5 motif.

It belongs to the G-alpha family. G(i/o/t/z) subfamily. As to quaternary structure, g proteins are composed of 3 units; alpha, beta and gamma. The alpha chain contains the guanine nucleotide binding site. Interacts (in GDP-bound form) with gpr-1; gpr-1 forms a complex with gpr-2 and lin-5. Interacts (in GDP-bound form) with gpb-1. Interacts (in GDP-bound form) with gbas-1 (via GBA motif); the interaction leads to activation of goa-1. Expressed in the ASER neuron and the intestine.

Functionally, guanine nucleotide-binding proteins (G proteins) are involved as modulators or transducers in various transmembrane signaling systems. In the 1-cell embryo, probably together with gpa-16, controls nuclear rotation and spindle elongation during mitosis. During the first embryonic cell divisions, plays a role in gpr-1/2 cortical localization and in the proper orientation of EMS blastomere mitotic spindle. Polarity determinants (par genes) may regulate lin-5/gpr-1/gpr-2/goa-1 locally to create the asymmetric forces that drive spindle movement. Involved in chemosensory responses to attractive and repellent odors detected by AWC and AWB sensory neurons, respectively. In ASER neurons, acts downstream of glr-3 to regulate cold avoidance behavior via calcium signaling, and it may also play a role in sensing cold in the intestine. Negatively regulates axon regeneration after injury downstream of the inhibitory compound arachidonoyl ethanolamide (AEA) by antagonizing the activation of the JNK pathway (mlk-1/mek-1/kgb-1). In neurons, may negatively regulate diacylglycerol (DAG) production mediated by egl-30 signaling cascade and thereby negatively regulates acetylcholine release. Couples to the muscarinic acetylcholine receptor gar-2 to negatively regulate cholinergic receptor activity in the presence of high levels of acetylcholine in ventral cord motor neurons. Plays a role in the navigational capacity of sperm and the targeting of sperm derived from males to the fertilization site in the uterus of hermaphrodites. Involved in egg-laying and in regulating dopamine-mediated locomotion. Most likely couples to the dopamine receptors dop-2 and dop-3 to positively regulate the dopamine-mediated suppression of crh-1/CREB1 transcription factor activation in cholinergic SIA neurons in the presence of food. The chain is Guanine nucleotide-binding protein G(o) subunit alpha from Caenorhabditis elegans.